The following is a 137-amino-acid chain: Bacteriohemerythrin (137 aa).

His21, His53, Glu57, His72, His76, His112, and Asp117 together coordinate Fe cation.

The protein belongs to the hemerythrin family. Monomer.

In terms of biological role, oxygen-binding protein. May be involved in a storage mechanism or for delivery to oxygen-requiring enzymes. The oxygen-binding site contains two iron atoms. This is Bacteriohemerythrin from Ralstonia nicotianae (strain ATCC BAA-1114 / GMI1000) (Ralstonia solanacearum).